A 38-amino-acid chain; its full sequence is Toxin CSTX-16 (38 aa).

Gln-19 and Gln-38 each carry glutamine amide.

Belongs to the cationic peptide 04 (cupiennin) family. 10 (double chain) subfamily. As to expression, expressed by the venom gland.

It localises to the secreted. This Cupiennius salei (American wandering spider) protein is Toxin CSTX-16.